We begin with the raw amino-acid sequence, 141 residues long: Large ribosomal subunit protein uL22 (141 aa).

It belongs to the universal ribosomal protein uL22 family. In terms of assembly, part of the 50S ribosomal subunit.

Its function is as follows. This protein binds specifically to 23S rRNA; its binding is stimulated by other ribosomal proteins, e.g. L4, L17, and L20. It is important during the early stages of 50S assembly. It makes multiple contacts with different domains of the 23S rRNA in the assembled 50S subunit and ribosome. The globular domain of the protein is located near the polypeptide exit tunnel on the outside of the subunit, while an extended beta-hairpin is found that lines the wall of the exit tunnel in the center of the 70S ribosome. The protein is Large ribosomal subunit protein uL22 of Frankia casuarinae (strain DSM 45818 / CECT 9043 / HFP020203 / CcI3).